The chain runs to 61 residues: Protein translocase subunit SecE (61 aa).

Residues 39 to 59 (LGIILIGLIGMLIRIMGILVL) traverse the membrane as a helical segment.

Belongs to the SecE/SEC61-gamma family. As to quaternary structure, component of the Sec protein translocase complex. Heterotrimer consisting of SecY (alpha), SecG (beta) and SecE (gamma) subunits. The heterotrimers can form oligomers, although 1 heterotrimer is thought to be able to translocate proteins. Interacts with the ribosome. May interact with SecDF, and other proteins may be involved.

It localises to the cell membrane. Its function is as follows. Essential subunit of the Sec protein translocation channel SecYEG. Clamps together the 2 halves of SecY. May contact the channel plug during translocation. The protein is Protein translocase subunit SecE of Pyrococcus abyssi (strain GE5 / Orsay).